Here is a 460-residue protein sequence, read N- to C-terminus: Acetyl-coenzyme A carboxylase carboxyl transferase subunit beta, chloroplastic (460 aa).

The CoA carboxyltransferase N-terminal domain occupies 179-460; the sequence is LWVQCESCYG…GFFPLTQNGN (282 aa). Zn(2+) is bound by residues cysteine 183, cysteine 186, cysteine 202, and cysteine 205. The C4-type zinc finger occupies 183-205; it reads CESCYGLNYKKFFKSKMNICEHC.

Belongs to the AccD/PCCB family. In terms of assembly, acetyl-CoA carboxylase is a heterohexamer composed of biotin carboxyl carrier protein, biotin carboxylase and 2 subunits each of ACCase subunit alpha and ACCase plastid-coded subunit beta (accD). It depends on Zn(2+) as a cofactor.

Its subcellular location is the plastid. The protein resides in the chloroplast stroma. The enzyme catalyses N(6)-carboxybiotinyl-L-lysyl-[protein] + acetyl-CoA = N(6)-biotinyl-L-lysyl-[protein] + malonyl-CoA. It functions in the pathway lipid metabolism; malonyl-CoA biosynthesis; malonyl-CoA from acetyl-CoA: step 1/1. Its function is as follows. Component of the acetyl coenzyme A carboxylase (ACC) complex. Biotin carboxylase (BC) catalyzes the carboxylation of biotin on its carrier protein (BCCP) and then the CO(2) group is transferred by the transcarboxylase to acetyl-CoA to form malonyl-CoA. This Cicer arietinum (Chickpea) protein is Acetyl-coenzyme A carboxylase carboxyl transferase subunit beta, chloroplastic.